Here is a 254-residue protein sequence, read N- to C-terminus: Nickel import ATP-binding protein NikD (254 aa).

Positions 2–241 (PQQIELRNIA…PKHTVTRSLV (240 aa)) constitute an ABC transporter domain. 36–43 (GGSGSGKS) contacts ATP.

Belongs to the ABC transporter superfamily. Nickel importer (TC 3.A.1.5.3) family. As to quaternary structure, the complex is composed of two ATP-binding proteins (NikD and NikE), two transmembrane proteins (NikB and NikC) and a solute-binding protein (NikA).

It is found in the cell inner membrane. The catalysed reaction is Ni(2+)(out) + ATP + H2O = Ni(2+)(in) + ADP + phosphate + H(+). Part of the ABC transporter complex NikABCDE involved in nickel import. Responsible for energy coupling to the transport system. This Escherichia coli (strain K12) protein is Nickel import ATP-binding protein NikD.